The sequence spans 352 residues: Biotin synthase (352 aa).

In terms of domain architecture, Radical SAM core spans 41–268 (NEVQVSTLLS…ASHVRLSAGR (228 aa)). Residues C56, C60, and C63 each coordinate [4Fe-4S] cluster. Positions 100, 131, 191, and 263 each coordinate [2Fe-2S] cluster.

Belongs to the radical SAM superfamily. Biotin synthase family. As to quaternary structure, homodimer. Requires [4Fe-4S] cluster as cofactor. [2Fe-2S] cluster is required as a cofactor.

It carries out the reaction (4R,5S)-dethiobiotin + (sulfur carrier)-SH + 2 reduced [2Fe-2S]-[ferredoxin] + 2 S-adenosyl-L-methionine = (sulfur carrier)-H + biotin + 2 5'-deoxyadenosine + 2 L-methionine + 2 oxidized [2Fe-2S]-[ferredoxin]. The protein operates within cofactor biosynthesis; biotin biosynthesis; biotin from 7,8-diaminononanoate: step 2/2. Its function is as follows. Catalyzes the conversion of dethiobiotin (DTB) to biotin by the insertion of a sulfur atom into dethiobiotin via a radical-based mechanism. In Marinobacter nauticus (strain ATCC 700491 / DSM 11845 / VT8) (Marinobacter aquaeolei), this protein is Biotin synthase.